Here is a 338-residue protein sequence, read N- to C-terminus: MAILVTGGAGYIGSHTVVELLNVGKEVVVLDNLCNSSPKSLERVKQITGKEAKFYEGDILDRALLQKIFAENEINSVIHFAGLKAVGESVQKPTEYYMNNVAGTLVLIQEMKKAGVWNFVFSSSATVYGDPKIIPITEDCEVGGTTNPYGTSKYMVEQILRDTAKAEPKFSMTILRYFNPVGAHESGLIGEDPNGIPNNLLPYISQVAIGKLAQLSVFGSDYDTHDGTGVRDYIHVVDLAVGHLKALQRHENDAGLHIYNLGTGHGYSVLDMVKAFEKANNITIAYKLVERRSGDIATCYSDPSLAAKELGWVAERGLEKMMQDTWNWQKNNPKGYRD.

Residues 11–12 (YI), 31–36 (DNLCNS), 58–59 (DI), 80–84 (FAGLK), Asn-99, Ser-124, Tyr-149, Lys-153, and Phe-178 contribute to the NAD(+) site. Substrate contacts are provided by Ser-124 and Tyr-149. Tyr-149 (proton acceptor) is an active-site residue. Substrate contacts are provided by residues Asn-179, 199 to 200 (NL), 216 to 218 (SVF), Arg-231, and 292 to 295 (RSGD).

This sequence belongs to the NAD(P)-dependent epimerase/dehydratase family. As to quaternary structure, homodimer. The cofactor is NAD(+).

The catalysed reaction is UDP-alpha-D-glucose = UDP-alpha-D-galactose. The protein operates within carbohydrate metabolism; galactose metabolism. In terms of biological role, involved in the metabolism of galactose. Catalyzes the conversion of UDP-galactose (UDP-Gal) to UDP-glucose (UDP-Glc) through a mechanism involving the transient reduction of NAD. By controlling the internal galactose concentration, it may be linked to the biosynthesis of lipopolysaccharide surface molecules, which are important for the pathogenesis of H.influenzae. In Haemophilus influenzae (strain ATCC 51907 / DSM 11121 / KW20 / Rd), this protein is UDP-glucose 4-epimerase (galE).